Consider the following 387-residue polypeptide: Xylose isomerase (387 aa).

Residues histidine 53 and aspartate 56 contribute to the active site. Residues glutamate 180, glutamate 216, histidine 219, aspartate 244, aspartate 254, aspartate 256, and aspartate 286 each contribute to the Mg(2+) site.

This sequence belongs to the xylose isomerase family. As to quaternary structure, homotetramer. Requires Mg(2+) as cofactor.

The protein localises to the cytoplasm. It carries out the reaction alpha-D-xylose = alpha-D-xylulofuranose. The protein is Xylose isomerase (xylA) of Thermus caldophilus.